A 646-amino-acid chain; its full sequence is Aquaglycerol porin AQY3 (646 aa).

Residues 1 to 14 (MSYESGRSSSSSES) show a composition bias toward low complexity. 2 disordered regions span residues 1 to 68 (MSYE…SRNK) and 175 to 262 (KNMD…KKRT). At 1 to 350 (MSYESGRSSS…AKIRYHMREP (350 aa)) the chain is on the cytoplasmic side. Positions 19–41 (TLKEEPNGKIAWEESVKKSRENN) are enriched in basic and acidic residues. Residues 190–201 (TDISRGGSTTSV) are compositionally biased toward polar residues. Residues 351-371 (FAEFLGTLVLVIFGVGGNLQA) form a helical membrane-spanning segment. The Extracellular portion of the chain corresponds to 372-383 (TVTKGSGGSYES). The chain crosses the membrane as a helical span at residues 384–404 (LSFAWGFGCMLGVYVAGGISG). Residues 405–427 (GHINPAVTISMAIFRKFPWKKVP) are Cytoplasmic-facing. The NPA 1 motif lies at 408-410 (NPA). A helical transmembrane segment spans residues 428 to 448 (VYIVAQIIGAYFGGAMAYGYF). The Extracellular portion of the chain corresponds to 449 to 481 (WSSITEFEGGPHIRTTATGACLFTDPKSYVTWR). A helical transmembrane segment spans residues 482–502 (NAFFDEFIGASILVGCLMALL). Residues 503–509 (DDSNAPP) lie on the Cytoplasmic side of the membrane. A helical membrane pass occupies residues 510-530 (GNGMTALIIGFLVAAIGMALG). Topologically, residues 531–569 (YQTSFTINPARDLGPRIFASMIGYGPHAFHLTHWWWTWG) are extracellular. Residues 538–540 (NPA) carry the NPA 2 motif. Residues 570–590 (AWGGPIAGGIAGALIYDIFIF) traverse the membrane as a helical segment. The Cytoplasmic segment spans residues 591-646 (TGCESPVNYPDNGYIENRVGKLLHAEFHQNDGTVSDESGVNSNSNTGSKKSVPTSS). A disordered region spans residues 621-646 (DGTVSDESGVNSNSNTGSKKSVPTSS).

This sequence belongs to the MIP/aquaporin (TC 1.A.8) family.

It localises to the cell membrane. It catalyses the reaction glycerol(in) = glycerol(out). In terms of biological role, channel protein that mediates glycerol entry under ethanol stimulation. Does not seem to mediate glycerol uptake under standard conditions. In Saccharomyces cerevisiae (strain ATCC 204508 / S288c) (Baker's yeast), this protein is Aquaglycerol porin AQY3.